The chain runs to 512 residues: GMP synthase [glutamine-hydrolyzing] (512 aa).

One can recognise a Glutamine amidotransferase type-1 domain in the interval 7-197 (TIIVLDFGSQ…VFGVCGCSEG (191 aa)). The active-site Nucleophile is the C84. Residues H171 and E173 contribute to the active site. The 190-residue stretch at 198–387 (WNMENFIEVE…LGIPDEIVWR (190 aa)) folds into the GMPS ATP-PPase domain. 225 to 231 (SGGVDSS) contributes to the ATP binding site.

As to quaternary structure, homodimer.

It catalyses the reaction XMP + L-glutamine + ATP + H2O = GMP + L-glutamate + AMP + diphosphate + 2 H(+). It functions in the pathway purine metabolism; GMP biosynthesis; GMP from XMP (L-Gln route): step 1/1. Functionally, catalyzes the synthesis of GMP from XMP. This Bacillus cereus (strain B4264) protein is GMP synthase [glutamine-hydrolyzing].